A 284-amino-acid polypeptide reads, in one-letter code: Acetylglutamate kinase (284 aa).

Residues 64-65 (GG), Arg-86, and Asn-181 each bind substrate.

This sequence belongs to the acetylglutamate kinase family. ArgB subfamily.

The protein resides in the cytoplasm. It carries out the reaction N-acetyl-L-glutamate + ATP = N-acetyl-L-glutamyl 5-phosphate + ADP. It participates in amino-acid biosynthesis; L-arginine biosynthesis; N(2)-acetyl-L-ornithine from L-glutamate: step 2/4. In terms of biological role, catalyzes the ATP-dependent phosphorylation of N-acetyl-L-glutamate. The chain is Acetylglutamate kinase from Wolinella succinogenes (strain ATCC 29543 / DSM 1740 / CCUG 13145 / JCM 31913 / LMG 7466 / NCTC 11488 / FDC 602W) (Vibrio succinogenes).